The following is a 649-amino-acid chain: WEB family protein At5g55860 (649 aa).

3 coiled-coil regions span residues 59 to 227 (EKVL…ACSQ), 267 to 356 (EFAK…IESV), and 391 to 461 (TINQ…MSEK). Over residues 443 to 453 (EAKAAETKALE) the composition is skewed to basic and acidic residues. The interval 443–483 (EAKAAETKALEQIKSMSEKTNAARNSTSSESGSQSITLSQE) is disordered. A compositionally biased stretch (polar residues) spans 456 to 467 (KSMSEKTNAARN). The segment covering 468–482 (STSSESGSQSITLSQ) has biased composition (low complexity). A coiled-coil region spans residues 505-549 (AALAQVEAVRASENETLKKLETTQEEIKKLKTATEEALKKAAMAD). Residues 583–611 (MKMASESSPQQHYKAPKQKPVNNKLEKTK) are disordered.

The protein belongs to the WEB family.

This chain is WEB family protein At5g55860, found in Arabidopsis thaliana (Mouse-ear cress).